We begin with the raw amino-acid sequence, 234 residues long: Small ribosomal subunit protein eS4 (234 aa).

One can recognise an S4 RNA-binding domain in the interval 37 to 99; the sequence is VPLLIVLRDV…REEYYRVFPG (63 aa).

This sequence belongs to the eukaryotic ribosomal protein eS4 family.

The chain is Small ribosomal subunit protein eS4 (rps4e) from Haloarcula marismortui (strain ATCC 43049 / DSM 3752 / JCM 8966 / VKM B-1809) (Halobacterium marismortui).